The chain runs to 142 residues: Antirestriction protein KlcA (142 aa).

It belongs to the antirestriction protein family.

Functionally, could be involved in overcoming restriction barriers during establishment after conjugative transfer. The polypeptide is Antirestriction protein KlcA (klcA) (Escherichia coli).